We begin with the raw amino-acid sequence, 543 residues long: UBP9-binding protein bun62 (543 aa).

At S43 the chain carries Phosphoserine. 5 WD repeats span residues 239–279, 320–361, 362–401, 404–448, and 513–542; these read LNSS…QPLH, FSKS…DVFH, SYFA…LVAR, GHKS…IHRP, and VDDS…TWQR.

Interacts with ubp9 and bun107.

The protein resides in the nucleus. It is found in the cytoplasm. The protein localises to the cell tip. Functionally, required for the ubp9 recruitment to septa and cell tips but also for its enzymatic activity at these specific locations. The polypeptide is UBP9-binding protein bun62 (bun62) (Schizosaccharomyces pombe (strain 972 / ATCC 24843) (Fission yeast)).